The chain runs to 419 residues: Zinc finger protein Pegasus (419 aa).

K5 is covalently cross-linked (Glycyl lysine isopeptide (Lys-Gly) (interchain with G-Cter in SUMO2)). C2H2-type zinc fingers lie at residues 82-104 (LKCR…IRIH), 110-132 (HRCH…MRSH), and 138-161 (YKCE…RRKH). K185 participates in a covalent cross-link: Glycyl lysine isopeptide (Lys-Gly) (interchain with G-Cter in SUMO2). 2 stretches are compositionally biased toward polar residues: residues 223–236 (QTDS…TTPT) and 262–273 (LSSLPPENQNPA). Disordered regions lie at residues 223 to 247 (QTDS…QELM) and 262 to 356 (LSSL…PALP). Residues 290 to 311 (QPSTQAVVSAVSASIPQSSSPT) are compositionally biased toward low complexity. The span at 332–349 (SEPSAHTSTPSIGNSQPS) shows a compositional bias: polar residues. 2 consecutive C2H2-type zinc fingers follow at residues 364-386 (HHCQ…MGCH) and 392-416 (FQCN…RGQH).

The protein belongs to the Ikaros C2H2-type zinc-finger protein family. As to quaternary structure, self-associates. Interacts with other family members; IKZF1, IKZF2, IKZF3 and IKZF4. Expressed in brain, heart, skeletal muscle, kidney, and liver. Expressed in the hematopoietic cell lines MOLT-4, NALM-6 and K-562. Highly expressed in THP-1 and M-07e cell lines, which have characteristics of myeloid and early megakaryocytic cells respectively.

The protein resides in the nucleus. Its function is as follows. Transcriptional repressor that binds the core 5'GNNTGTNG-3' DNA consensus sequence. Involved in megakaryocyte differentiation. The protein is Zinc finger protein Pegasus (IKZF5) of Homo sapiens (Human).